The chain runs to 345 residues: L-threonine 3-dehydrogenase (345 aa).

Cysteine 42 contributes to the Zn(2+) binding site. Active-site charge relay system residues include threonine 44 and histidine 47. The Zn(2+) site is built by histidine 67, glutamate 68, cysteine 97, cysteine 100, cysteine 103, and cysteine 111. Residues isoleucine 179, aspartate 199, arginine 204, 266–268 (LGI), and 290–291 (IY) each bind NAD(+).

It belongs to the zinc-containing alcohol dehydrogenase family. Homotetramer. It depends on Zn(2+) as a cofactor.

Its subcellular location is the cytoplasm. It carries out the reaction L-threonine + NAD(+) = (2S)-2-amino-3-oxobutanoate + NADH + H(+). Its pathway is amino-acid degradation; L-threonine degradation via oxydo-reductase pathway; glycine from L-threonine: step 1/2. In terms of biological role, catalyzes the NAD(+)-dependent oxidation of L-threonine to 2-amino-3-ketobutyrate. In Sinorhizobium fredii (strain NBRC 101917 / NGR234), this protein is L-threonine 3-dehydrogenase.